The sequence spans 244 residues: Orotidine 5'-phosphate decarboxylase (244 aa).

Substrate-binding positions include D14, K36, 63 to 72 (DLKFHDIPNT), T127, R188, Q197, G217, and R218. The Proton donor role is filled by K65.

It belongs to the OMP decarboxylase family. Type 1 subfamily. Homodimer.

It catalyses the reaction orotidine 5'-phosphate + H(+) = UMP + CO2. Its pathway is pyrimidine metabolism; UMP biosynthesis via de novo pathway; UMP from orotate: step 2/2. In terms of biological role, catalyzes the decarboxylation of orotidine 5'-monophosphate (OMP) to uridine 5'-monophosphate (UMP). The polypeptide is Orotidine 5'-phosphate decarboxylase (Syntrophotalea carbinolica (strain DSM 2380 / NBRC 103641 / GraBd1) (Pelobacter carbinolicus)).